A 158-amino-acid polypeptide reads, in one-letter code: Ribonucleases P/MRP protein subunit POP6 (158 aa).

A coiled-coil region spans residues 51–71 (KNDNIKKSVNKLDKQINMADR).

Component of nuclear RNase P and RNase MRP complexes. RNase P consists of an RNA moiety and at least 9 protein subunits including POP1, POP3, POP4, POP5, POP6, POP7, POP8, RPP1 and RPR2. RNase MRP complex consists of an RNA moiety and at least 10 protein subunits including POP1, POP3, POP4, POP5, POP6, POP7, POP8, RMP1, RPP1 and SNM1, many of which are shared with the RNase P complex.

Its subcellular location is the nucleus. The enzyme catalyses Endonucleolytic cleavage of RNA, removing 5'-extranucleotides from tRNA precursor.. In terms of biological role, component of ribonuclease P, a protein complex that generates mature tRNA molecules by cleaving their 5'-ends. Also a component of RNase MRP, which cleaves pre-rRNA sequences. The sequence is that of Ribonucleases P/MRP protein subunit POP6 (POP6) from Saccharomyces cerevisiae (strain ATCC 204508 / S288c) (Baker's yeast).